The primary structure comprises 1548 residues: MGDPAAHEMADLERGFSSEDDAEYRSGDDEASKFVENEPSKRGKISQKKKIEQTNFAKWMDTNQKSLTRKAVKQSVNQDNSLAYMIRSWEGGEKIITSPRDYQMELFERAKQQNTIAVLDTGSGKTLIAALLLDHTVNQELEDRAKGLPRRIAFFLVEKVALAFQQHAVLECNLAHSVAVFSGESIKNTWTKGFWETQLADHEVIVCTAEILNQCLQYAYIRIDQINLLVFDEAHHTKKNHPYARIIKDYYASGKDRGLRLPRIFGMTASPVDALIDVRQAAIELEGLLHSRIATTADPDALRRAVGRPKKEIIYKYNPLVKPIQTMLTFKLRPLIANNKQFSKAFAFSEAAARELGTWFVDRMWQLFLEDEELLKLEAKTERSLSKDMAAPEVVEKHRNAVRSARELIRSHEFPKPEPGLLSSKLKTLSKLLEEYFTDSSIRCIVFVERRWTAKLLTDFFESHAAEIPGLKVGSLMGANAEGGSSQTSFREQIRTILSFKKGNTNCIFATSVAEEGLDIPDCNLIIRFDICKTMIQYIQSRGRARQADSTYIHLIEGGNGDHRRIMHQNAENEKLLRRFCNTQPEDRLLKGSDYDMDFFLRQERNQRQYTIKSTGARLTYKNSLPILQAFLNTLRNQDDYAEGMDLVADYSILSVQGGFICEVMMPPLSPVTSAIGKVYSTKQVAKCSAAFELCFQLIQKKFLDDHLRSKFVEKRHVMANARLAVSSKNKAKYDMRLKPQIWAELGVPEKLYATVLILSKPSALERPSRPLFILTRTPLPQLKPFLLFLGPVEQEMTSDLVCQVLNCPITPTEEDLQLLTKFTLKIFVDIFNKKYAANAQALPYFFAPTNKDHVFLFSNLQDPRNAVDWPLLRHVADRDAEAYTGDEPEEFFQDKYIVDPHDGARRFWLQGIRKDLTCTSPVPADVEHQPTHRQWKRREVPHDILHWSLTAWKATREAHENKWKENQPVVVGKYATLRRNFLADINETSKNPFCYFVLEPMRISPLPVDVVAMAYLLPSIIHRIEQNLIALDACRLLQLDIHPDLALEALTKDSDNQGEDERMDSIQAFEPVNFQPGMGANYERLELLGDSFLKMATTIAVFTLIPNKDEFDYHCERMVMICNQNLFGVAKSDDLKLHEYIRSKSFERGTWYPVLKLEFGKTHLKTLKQMDEHRLADKSIADVCEALIGAAYMTTRKHDDYDLAVRAVTRLVNHKQHPMTKWDDYHAAYVMPGWQTMPANAAELDMAQKIHEATGYQFKHPRVLRSAFRHPSRPYVFDKVPHYQRLEFLGDALFDMACVDYLFHIAPDEGPQWLTEHKMAMVSNQFLGCLAVSLGFHKFILHHHASIGSQIHEYVTEITEARRAAEDAAEAAGKPRSAYSRDYWVEAPQPPKCIPDVLEAYVGAIFVDSKYDYSVVQQFFHAHVLPFFASMRMYDTFANKHPVTFFTQYVFETFGCHAYGLHAEEMPVKDDTGLVTGKTQVVAGILLHGQVVEGAVRDSGRYAKIAAARKALDKLRSMTRQEFLDAYKCDCKPGEAAEDISESATAI.

Positions 1–41 are enriched in basic and acidic residues; the sequence is MGDPAAHEMADLERGFSSEDDAEYRSGDDEASKFVENEPSK. A disordered region spans residues 1–48; that stretch reads MGDPAAHEMADLERGFSSEDDAEYRSGDDEASKFVENEPSKRGKISQK. In terms of domain architecture, Helicase ATP-binding spans 106-289; the sequence is LFERAKQQNT…QAAIELEGLL (184 aa). Residue 119–126 coordinates ATP; the sequence is LDTGSGKT. Positions 232–235 match the DEAH box motif; the sequence is DEAH. A Helicase C-terminal domain is found at 428-589; sequence TLSKLLEEYF…FCNTQPEDRL (162 aa). The 95-residue stretch at 624–718 folds into the Dicer dsRNA-binding fold domain; the sequence is SLPILQAFLN…RSKFVEKRHV (95 aa). The region spanning 871–1006 is the PAZ domain; sequence PLLRHVADRD…FVLEPMRISP (136 aa). RNase III domains are found at residues 1051 to 1197 and 1248 to 1411; these read LTKD…MTTR and AQKI…VDSK. Residues Glu-1288, Asp-1397, and Glu-1400 each contribute to the Mg(2+) site. The DRBM domain occupies 1445–1518; it reads TFFTQYVFET…ARKALDKLRS (74 aa). Positions 1457, 1489, 1530, and 1532 each coordinate Zn(2+).

It belongs to the helicase family. Dicer subfamily. Mg(2+) is required as a cofactor. Requires Mn(2+) as cofactor.

In terms of biological role, dicer-like endonuclease involved in cleaving double-stranded RNA in the RNA interference (RNAi) pathway. Produces 21 to 25 bp dsRNAs (siRNAs) which target the selective destruction of homologous RNAs leading to sequence-specific suppression of gene expression, called post-transcriptional gene silencing (PTGS). Part of a broad host defense response against viral infection and transposons. The protein is Dicer-like protein 1 (DCL-1) of Cryphonectria parasitica (Chestnut blight fungus).